The chain runs to 340 residues: L-threonine 3-dehydrogenase (340 aa).

Zn(2+) is bound at residue Cys-38. Catalysis depends on charge relay system residues Thr-40 and His-43. Zn(2+)-binding residues include His-63, Glu-64, Cys-93, Cys-96, Cys-99, and Cys-107. NAD(+) contacts are provided by residues Ile-175, Asp-195, Arg-200, Leu-261–Ile-263, and Ile-285–Tyr-286.

Belongs to the zinc-containing alcohol dehydrogenase family. In terms of assembly, homotetramer. Zn(2+) is required as a cofactor.

The protein localises to the cytoplasm. It carries out the reaction L-threonine + NAD(+) = (2S)-2-amino-3-oxobutanoate + NADH + H(+). Its pathway is amino-acid degradation; L-threonine degradation via oxydo-reductase pathway; glycine from L-threonine: step 1/2. In terms of biological role, catalyzes the NAD(+)-dependent oxidation of L-threonine to 2-amino-3-ketobutyrate. The chain is L-threonine 3-dehydrogenase from Xanthomonas oryzae pv. oryzae (strain MAFF 311018).